The primary structure comprises 295 residues: Tyrosine recombinase XerC (295 aa).

Residues 1-84 enclose the Core-binding (CB) domain; the sequence is MTLEEQFLSY…SLKSFYRFLT (84 aa). The region spanning 105–289 is the Tyr recombinase domain; sequence KLPEFFYQDE…SMQHLTVEYR (185 aa). Catalysis depends on residues Arg145, Lys169, His241, Arg244, and His267. Catalysis depends on Tyr276, which acts as the O-(3'-phospho-DNA)-tyrosine intermediate.

This sequence belongs to the 'phage' integrase family. XerC subfamily. As to quaternary structure, forms a cyclic heterotetrameric complex composed of two molecules of XerC and two molecules of XerD.

The protein resides in the cytoplasm. Its function is as follows. Site-specific tyrosine recombinase, which acts by catalyzing the cutting and rejoining of the recombining DNA molecules. The XerC-XerD complex is essential to convert dimers of the bacterial chromosome into monomers to permit their segregation at cell division. It also contributes to the segregational stability of plasmids. The polypeptide is Tyrosine recombinase XerC (Lactobacillus delbrueckii subsp. bulgaricus (strain ATCC 11842 / DSM 20081 / BCRC 10696 / JCM 1002 / NBRC 13953 / NCIMB 11778 / NCTC 12712 / WDCM 00102 / Lb 14)).